We begin with the raw amino-acid sequence, 122 residues long: Large ribosomal subunit protein uL14 (122 aa).

This sequence belongs to the universal ribosomal protein uL14 family. As to quaternary structure, part of the 50S ribosomal subunit. Forms a cluster with proteins L3 and L19. In the 70S ribosome, L14 and L19 interact and together make contacts with the 16S rRNA in bridges B5 and B8.

In terms of biological role, binds to 23S rRNA. Forms part of two intersubunit bridges in the 70S ribosome. This is Large ribosomal subunit protein uL14 from Pseudomonas aeruginosa (strain LESB58).